The sequence spans 173 residues: Cytochrome c-type biogenesis protein CcmE (173 aa).

The Cytoplasmic segment spans residues Met1 to Arg8. The helical; Signal-anchor for type II membrane protein transmembrane segment at Leu9–Ala29 threads the bilayer. At Phe30–Gly173 the chain is on the periplasmic side. The heme site is built by His127 and Tyr131. Residues Lys145–Gly173 form a disordered region.

Belongs to the CcmE/CycJ family.

The protein localises to the cell inner membrane. Its function is as follows. Heme chaperone required for the biogenesis of c-type cytochromes. Transiently binds heme delivered by CcmC and transfers the heme to apo-cytochromes in a process facilitated by CcmF and CcmH. The sequence is that of Cytochrome c-type biogenesis protein CcmE from Acidiphilium cryptum (strain JF-5).